The following is a 156-amino-acid chain: Small ribosomal subunit protein eS19A (156 aa).

This sequence belongs to the eukaryotic ribosomal protein eS19 family.

The sequence is that of Small ribosomal subunit protein eS19A (RpS19a) from Drosophila melanogaster (Fruit fly).